A 303-amino-acid polypeptide reads, in one-letter code: Coenzyme PQQ synthesis protein B (303 aa).

Belongs to the PqqB family.

It functions in the pathway cofactor biosynthesis; pyrroloquinoline quinone biosynthesis. Its function is as follows. May be involved in the transport of PQQ or its precursor to the periplasm. The polypeptide is Coenzyme PQQ synthesis protein B (Pseudomonas fluorescens (strain Pf0-1)).